The primary structure comprises 90 residues: DNA-binding protein HU-alpha (90 aa).

Belongs to the bacterial histone-like protein family. As to quaternary structure, heterodimer of an alpha and a beta chain.

Its function is as follows. Histone-like DNA-binding protein which is capable of wrapping DNA to stabilize it, and thus to prevent its denaturation under extreme environmental conditions. The protein is DNA-binding protein HU-alpha (hupA) of Pseudomonas aeruginosa (strain ATCC 15692 / DSM 22644 / CIP 104116 / JCM 14847 / LMG 12228 / 1C / PRS 101 / PAO1).